The primary structure comprises 397 residues: MSVAFAGNSTSGSSREAGPLRVMIVDDSVVIRGLISRWVGAEHDMEVAASLRTGLEAVNQLERINPDVAVLDIEMPELDGISALPQLLAKKRDLVIIMASTLTRRNAEISFKALSLGAADYIPKPESTREASAADTFHHDLIQKIRHLGARLRRKAAVASPPLAPASPPPAARAPFVARPAAPAPAANALLPGALSTRPFSTLAPKVLLIGSSTGGPQALMALVTELGPVIDRFPVLITQHMPPTFTTILAEHLARSSRRPAAEAVDGEPVKPGRIYLAPGGKHMRVVRSGADVAIALDDGPAVNFCKPAVDPLFTSAIDIWHGAILSVILTGMGSDGMRGGKDIVAAGGSVIAQDEASSVVWGMPGAAANAGICAAILPLNQIGAKVNRLFAGDRS.

A Response regulatory domain is found at 21-139 (RVMIVDDSVV…EASAADTFHH (119 aa)). Residue aspartate 72 is modified to 4-aspartylphosphate. The CheB-type methylesterase domain occupies 199-388 (PFSTLAPKVL…LPLNQIGAKV (190 aa)). Catalysis depends on residues serine 213, histidine 241, and aspartate 337.

The protein belongs to the CheB family. Post-translationally, phosphorylated by CheA. Phosphorylation of the N-terminal regulatory domain activates the methylesterase activity.

The protein resides in the cytoplasm. It carries out the reaction [protein]-L-glutamate 5-O-methyl ester + H2O = L-glutamyl-[protein] + methanol + H(+). The enzyme catalyses L-glutaminyl-[protein] + H2O = L-glutamyl-[protein] + NH4(+). Its function is as follows. Involved in chemotaxis. Part of a chemotaxis signal transduction system that modulates chemotaxis in response to various stimuli. Catalyzes the demethylation of specific methylglutamate residues introduced into the chemoreceptors (methyl-accepting chemotaxis proteins or MCP) by CheR. Also mediates the irreversible deamidation of specific glutamine residues to glutamic acid. This chain is Protein-glutamate methylesterase/protein-glutamine glutaminase of group 2 operon, found in Bradyrhizobium diazoefficiens (strain JCM 10833 / BCRC 13528 / IAM 13628 / NBRC 14792 / USDA 110).